Here is a 201-residue protein sequence, read N- to C-terminus: Probable nicotinate-nucleotide adenylyltransferase (201 aa).

A disordered region spans residues 182 to 201 (GPESSQSATSIRERGGWSLR). Residues 192-201 (IRERGGWSLR) show a composition bias toward basic and acidic residues.

Belongs to the NadD family.

It catalyses the reaction nicotinate beta-D-ribonucleotide + ATP + H(+) = deamido-NAD(+) + diphosphate. It functions in the pathway cofactor biosynthesis; NAD(+) biosynthesis; deamido-NAD(+) from nicotinate D-ribonucleotide: step 1/1. In terms of biological role, catalyzes the reversible adenylation of nicotinate mononucleotide (NaMN) to nicotinic acid adenine dinucleotide (NaAD). This chain is Probable nicotinate-nucleotide adenylyltransferase, found in Parvibaculum lavamentivorans (strain DS-1 / DSM 13023 / NCIMB 13966).